The primary structure comprises 419 residues: UDP-N-acetylglucosamine 1-carboxyvinyltransferase (419 aa).

Residue 22-23 (KN) participates in phosphoenolpyruvate binding. R91 contributes to the UDP-N-acetyl-alpha-D-glucosamine binding site. The Proton donor role is filled by C115. 2-(S-cysteinyl)pyruvic acid O-phosphothioketal is present on C115. UDP-N-acetyl-alpha-D-glucosamine contacts are provided by residues 120 to 124 (RPVDL), 160 to 163 (KVSV), D305, and V327.

This sequence belongs to the EPSP synthase family. MurA subfamily.

The protein resides in the cytoplasm. The enzyme catalyses phosphoenolpyruvate + UDP-N-acetyl-alpha-D-glucosamine = UDP-N-acetyl-3-O-(1-carboxyvinyl)-alpha-D-glucosamine + phosphate. It functions in the pathway cell wall biogenesis; peptidoglycan biosynthesis. In terms of biological role, cell wall formation. Adds enolpyruvyl to UDP-N-acetylglucosamine. The sequence is that of UDP-N-acetylglucosamine 1-carboxyvinyltransferase from Escherichia coli (strain K12 / MC4100 / BW2952).